A 429-amino-acid chain; its full sequence is 26S proteasome regulatory subunit 6A homolog (429 aa).

A disordered region spans residues 1–21 (MSSPPPAAAAAMAVDDADDDQ). 217 to 224 (GPPGTGKT) is an ATP binding site.

The protein belongs to the AAA ATPase family.

It is found in the cytoplasm. The protein resides in the nucleus. In terms of biological role, the 26S proteasome is involved in the ATP-dependent degradation of ubiquitinated proteins. The regulatory (or ATPase) complex confers ATP dependency and substrate specificity to the 26S complex. This is 26S proteasome regulatory subunit 6A homolog (TBP1) from Oryza sativa subsp. japonica (Rice).